The sequence spans 432 residues: Serine/threonine-protein phosphatase 2A activator 1 (432 aa).

Residues 322–432 (PYSKVEDEEP…MAPTKAPWAK (111 aa)) form a disordered region. Over residues 366 to 389 (TVERLARRDGQRAAREKEEREDRA) the composition is skewed to basic and acidic residues. Positions 396–412 (TTGAPGATALPPTRAPG) are enriched in low complexity.

This sequence belongs to the PTPA-type PPIase family.

The protein resides in the cytoplasm. The protein localises to the nucleus. It carries out the reaction [protein]-peptidylproline (omega=180) = [protein]-peptidylproline (omega=0). Functionally, PPIases accelerate the folding of proteins. It catalyzes the cis-trans isomerization of proline imidic peptide bonds in oligopeptides. Acts as a regulatory subunit for PP2A-like phosphatases modulating their activity or substrate specificity, probably by inducing a conformational change in the catalytic subunit, a direct target of the PPIase. Can reactivate inactive phosphatase PP2A-phosphatase methylesterase complexes (PP2Ai) in presence of ATP and Mg(2+) by dissociating the inactive form from the complex. The protein is Serine/threonine-protein phosphatase 2A activator 1 (RRD1) of Yarrowia lipolytica (strain CLIB 122 / E 150) (Yeast).